The chain runs to 389 residues: uncharacterized protein (389 aa).

Polar residues predominate over residues 1–12 (MVHATSQSASTE). 2 disordered regions span residues 1–49 (MVHA…DEDL) and 86–111 (HKSMGSTRGKKKRGKTAKKAKKANRA). The segment covering 40–49 (ESGDEYDEDL) has biased composition (acidic residues). Residues 93 to 110 (RGKKKRGKTAKKAKKANR) show a composition bias toward basic residues.

This is an uncharacterized protein from Caenorhabditis elegans.